Consider the following 356-residue polypeptide: Dihydroorotate dehydrogenase (quinone) (356 aa).

Residues 66–70 and Thr90 contribute to the FMN site; that span reads AGFDK. Lys70 contacts substrate. Substrate is bound at residue 115–119; sequence NRMGF. 2 residues coordinate FMN: Asn143 and Asn176. Substrate is bound at residue Asn176. Ser179 acts as the Nucleophile in catalysis. Asn181 contacts substrate. The FMN site is built by Lys212 and Thr240. 241–242 contacts substrate; the sequence is NT. FMN is bound by residues Gly266, Gly295, and 316-317; that span reads YT.

Belongs to the dihydroorotate dehydrogenase family. Type 2 subfamily. Monomer. It depends on FMN as a cofactor.

The protein localises to the cell membrane. The enzyme catalyses (S)-dihydroorotate + a quinone = orotate + a quinol. Its pathway is pyrimidine metabolism; UMP biosynthesis via de novo pathway; orotate from (S)-dihydroorotate (quinone route): step 1/1. Functionally, catalyzes the conversion of dihydroorotate to orotate with quinone as electron acceptor. The chain is Dihydroorotate dehydrogenase (quinone) from Rhodococcus opacus (strain B4).